Consider the following 394-residue polypeptide: 1-deoxy-D-xylulose 5-phosphate reductoisomerase (394 aa).

Residues Thr28, Gly29, Ser30, Ile31, Asn57, and Asn133 each coordinate NADPH. Lys134 contributes to the 1-deoxy-D-xylulose 5-phosphate binding site. An NADPH-binding site is contributed by Glu135. Asp157 serves as a coordination point for Mn(2+). The 1-deoxy-D-xylulose 5-phosphate site is built by Ser158, Glu159, Ser183, and His206. Residue Glu159 coordinates Mn(2+). Gly212 is an NADPH binding site. 1-deoxy-D-xylulose 5-phosphate contacts are provided by Ser219, Asn224, Lys225, and Glu228. Mn(2+) is bound at residue Glu228.

This sequence belongs to the DXR family. The cofactor is Mg(2+). Mn(2+) serves as cofactor.

It carries out the reaction 2-C-methyl-D-erythritol 4-phosphate + NADP(+) = 1-deoxy-D-xylulose 5-phosphate + NADPH + H(+). Its pathway is isoprenoid biosynthesis; isopentenyl diphosphate biosynthesis via DXP pathway; isopentenyl diphosphate from 1-deoxy-D-xylulose 5-phosphate: step 1/6. Catalyzes the NADPH-dependent rearrangement and reduction of 1-deoxy-D-xylulose-5-phosphate (DXP) to 2-C-methyl-D-erythritol 4-phosphate (MEP). The polypeptide is 1-deoxy-D-xylulose 5-phosphate reductoisomerase (Nocardia farcinica (strain IFM 10152)).